Consider the following 382-residue polypeptide: Small ribosomal subunit protein bS1 homolog (382 aa).

S1 motif domains follow at residues 16–84 (GDVV…LSKR), 102–167 (KEVF…LSHR), 188–256 (GSVL…LSIK), and 273–342 (GDVL…LSMR). Serine 243 is subject to Phosphoserine.

It belongs to the bacterial ribosomal protein bS1 family.

Functionally, plays a role in sporulation. Cannot be expressed in wild-type E.coli, does not complement an E.coli rpsA deletion. This Bacillus subtilis (strain 168) protein is Small ribosomal subunit protein bS1 homolog.